We begin with the raw amino-acid sequence, 102 residues long: Protein RnfH (102 aa).

This sequence belongs to the UPF0125 (RnfH) family.

The chain is Protein RnfH from Pseudomonas entomophila (strain L48).